The following is a 74-amino-acid chain: Cytochrome c oxidase subunit 2 (74 aa).

At 1–14 (MAHPSQLGLQDAAS) the chain is on the mitochondrial intermembrane side. The helical transmembrane segment at 15–45 (PVMEELLHFHDHALMIVFLISTLVLYIIVAM) threads the bilayer. Residues 46–74 (VSTKLTDKYTIDSQEIEIVWTVLPAVILI) are Mitochondrial matrix-facing.

It belongs to the cytochrome c oxidase subunit 2 family. As to quaternary structure, component of the cytochrome c oxidase (complex IV, CIV), a multisubunit enzyme composed of 14 subunits. The complex is composed of a catalytic core of 3 subunits MT-CO1, MT-CO2 and MT-CO3, encoded in the mitochondrial DNA, and 11 supernumerary subunits COX4I, COX5A, COX5B, COX6A, COX6B, COX6C, COX7A, COX7B, COX7C, COX8 and NDUFA4, which are encoded in the nuclear genome. The complex exists as a monomer or a dimer and forms supercomplexes (SCs) in the inner mitochondrial membrane with NADH-ubiquinone oxidoreductase (complex I, CI) and ubiquinol-cytochrome c oxidoreductase (cytochrome b-c1 complex, complex III, CIII), resulting in different assemblies (supercomplex SCI(1)III(2)IV(1) and megacomplex MCI(2)III(2)IV(2)). Found in a complex with TMEM177, COA6, COX18, COX20, SCO1 and SCO2. Interacts with TMEM177 in a COX20-dependent manner. Interacts with COX20. Interacts with COX16. Cu cation is required as a cofactor.

It localises to the mitochondrion inner membrane. The catalysed reaction is 4 Fe(II)-[cytochrome c] + O2 + 8 H(+)(in) = 4 Fe(III)-[cytochrome c] + 2 H2O + 4 H(+)(out). Functionally, component of the cytochrome c oxidase, the last enzyme in the mitochondrial electron transport chain which drives oxidative phosphorylation. The respiratory chain contains 3 multisubunit complexes succinate dehydrogenase (complex II, CII), ubiquinol-cytochrome c oxidoreductase (cytochrome b-c1 complex, complex III, CIII) and cytochrome c oxidase (complex IV, CIV), that cooperate to transfer electrons derived from NADH and succinate to molecular oxygen, creating an electrochemical gradient over the inner membrane that drives transmembrane transport and the ATP synthase. Cytochrome c oxidase is the component of the respiratory chain that catalyzes the reduction of oxygen to water. Electrons originating from reduced cytochrome c in the intermembrane space (IMS) are transferred via the dinuclear copper A center (CU(A)) of subunit 2 and heme A of subunit 1 to the active site in subunit 1, a binuclear center (BNC) formed by heme A3 and copper B (CU(B)). The BNC reduces molecular oxygen to 2 water molecules using 4 electrons from cytochrome c in the IMS and 4 protons from the mitochondrial matrix. This chain is Cytochrome c oxidase subunit 2 (mt-co2), found in Megalops atlanticus (Tarpon).